Consider the following 190-residue polypeptide: dITP/XTP pyrophosphatase (190 aa).

Residue 7-12 coordinates substrate; that stretch reads SNNKNK. The Proton acceptor role is filled by Asp-68. A Mg(2+)-binding site is contributed by Asp-68. Residues Thr-69, 148-151, Lys-171, and 176-177 contribute to the substrate site; these read FGYD and HR.

It belongs to the HAM1 NTPase family. Homodimer. It depends on Mg(2+) as a cofactor.

It carries out the reaction XTP + H2O = XMP + diphosphate + H(+). The catalysed reaction is dITP + H2O = dIMP + diphosphate + H(+). The enzyme catalyses ITP + H2O = IMP + diphosphate + H(+). Its function is as follows. Pyrophosphatase that catalyzes the hydrolysis of nucleoside triphosphates to their monophosphate derivatives, with a high preference for the non-canonical purine nucleotides XTP (xanthosine triphosphate), dITP (deoxyinosine triphosphate) and ITP. Seems to function as a house-cleaning enzyme that removes non-canonical purine nucleotides from the nucleotide pool, thus preventing their incorporation into DNA/RNA and avoiding chromosomal lesions. The sequence is that of dITP/XTP pyrophosphatase from Flavobacterium psychrophilum (strain ATCC 49511 / DSM 21280 / CIP 103535 / JIP02/86).